Reading from the N-terminus, the 73-residue chain is Translation initiation factor IF-1 (73 aa).

An S1-like domain is found at Met1 to Arg73.

It belongs to the IF-1 family. As to quaternary structure, component of the 30S ribosomal translation pre-initiation complex which assembles on the 30S ribosome in the order IF-2 and IF-3, IF-1 and N-formylmethionyl-tRNA(fMet); mRNA recruitment can occur at any time during PIC assembly.

It localises to the cytoplasm. One of the essential components for the initiation of protein synthesis. Stabilizes the binding of IF-2 and IF-3 on the 30S subunit to which N-formylmethionyl-tRNA(fMet) subsequently binds. Helps modulate mRNA selection, yielding the 30S pre-initiation complex (PIC). Upon addition of the 50S ribosomal subunit IF-1, IF-2 and IF-3 are released leaving the mature 70S translation initiation complex. The protein is Translation initiation factor IF-1 of Rhodopirellula baltica (strain DSM 10527 / NCIMB 13988 / SH1).